Reading from the N-terminus, the 550-residue chain is Glucose-6-phosphate isomerase 3 (550 aa).

E357 acts as the Proton donor in catalysis. Active-site residues include H388 and K514.

This sequence belongs to the GPI family.

The protein resides in the cytoplasm. The enzyme catalyses alpha-D-glucose 6-phosphate = beta-D-fructose 6-phosphate. The protein operates within carbohydrate biosynthesis; gluconeogenesis. Its pathway is carbohydrate degradation; glycolysis; D-glyceraldehyde 3-phosphate and glycerone phosphate from D-glucose: step 2/4. Functionally, catalyzes the reversible isomerization of glucose-6-phosphate to fructose-6-phosphate. This chain is Glucose-6-phosphate isomerase 3, found in Rhodococcus jostii (strain RHA1).